We begin with the raw amino-acid sequence, 264 residues long: [LysW]-aminoadipate/[LysW]-glutamate kinase (264 aa).

Substrate-binding positions include 35 to 36 (GG), Arg-62, and Asn-167.

This sequence belongs to the acetylglutamate kinase family. LysZ subfamily.

Its subcellular location is the cytoplasm. The enzyme catalyses [amino-group carrier protein]-C-terminal-N-(1,4-dicarboxybutan-1-yl)-L-glutamine + ATP = [amino-group carrier protein]-C-terminal-N-(1-carboxy-5-phosphooxy-5-oxopentan-1-yl)-L-glutamine + ADP. It catalyses the reaction [amino-group carrier protein]-C-terminal-gamma-(L-glutamyl)-L-glutamate + ATP = [amino-group carrier protein]-C-terminal-gamma-(5-phospho-L-glutamyl)-L-glutamate + ADP. Its pathway is amino-acid biosynthesis; L-lysine biosynthesis via AAA pathway; L-lysine from L-alpha-aminoadipate (Thermus route): step 2/5. It functions in the pathway amino-acid biosynthesis; L-arginine biosynthesis. Functionally, involved in both the arginine and lysine biosynthetic pathways. Phosphorylates the LysW-bound precursors glutamate (for arginine biosynthesis), respectively alpha-aminoadipate (for lysine biosynthesis). The protein is [LysW]-aminoadipate/[LysW]-glutamate kinase of Saccharolobus islandicus (strain Y.N.15.51 / Yellowstone #2) (Sulfolobus islandicus).